Reading from the N-terminus, the 772-residue chain is Mitochondrial intermediate peptidase (772 aa).

The N-terminal 37 residues, 1–37 (MLRTIILKAGSNASIPSPSRQNKLLRFFATAGAVSRT), are a transit peptide targeting the mitochondrion. H558 provides a ligand contact to Zn(2+). E559 is an active-site residue. The Zn(2+) site is built by H562 and E587.

Belongs to the peptidase M3 family. Requires Zn(2+) as cofactor.

Its subcellular location is the mitochondrion matrix. It catalyses the reaction Release of an N-terminal octapeptide as second stage of processing of some proteins imported into the mitochondrion.. Its activity is regulated as follows. Stimulated by Fe(2+). Cleaves proteins, imported into the mitochondrion, to their mature size. While most mitochondrial precursor proteins are processed to the mature form in one step by mitochondrial processing peptidase (MPP), the sequential cleavage by MIP of an octapeptide after initial processing by MPP is a required step for a subgroup of nuclear-encoded precursor proteins destined for the matrix or the inner membrane. Cleaves precursor proteins of respiratory components, including subunits of the electron transport chain and tricarboxylic acid cycle enzymes, and components of the mitochondrial genetic machinery, including ribosomal proteins, translation factors, and proteins required for mitochondrial DNA metabolism. The polypeptide is Mitochondrial intermediate peptidase (OCT1) (Saccharomyces cerevisiae (strain ATCC 204508 / S288c) (Baker's yeast)).